The sequence spans 173 residues: Archaemetzincin (173 aa).

His-130 is a binding site for Zn(2+). Glu-131 (proton acceptor) is an active-site residue. The Zn(2+) site is built by His-134, His-140, Cys-141, Cys-146, Cys-165, and Cys-168.

It belongs to the peptidase M54 family. Monomer. Zn(2+) serves as cofactor.

Functionally, probable zinc metalloprotease whose natural substrate is unknown. This Haloarcula marismortui (strain ATCC 43049 / DSM 3752 / JCM 8966 / VKM B-1809) (Halobacterium marismortui) protein is Archaemetzincin.